The sequence spans 161 residues: Endoribonuclease YbeY (161 aa).

Zn(2+)-binding residues include His-121, His-125, and His-131.

This sequence belongs to the endoribonuclease YbeY family. The cofactor is Zn(2+).

The protein localises to the cytoplasm. In terms of biological role, single strand-specific metallo-endoribonuclease involved in late-stage 70S ribosome quality control and in maturation of the 3' terminus of the 16S rRNA. This is Endoribonuclease YbeY from Xylella fastidiosa (strain 9a5c).